Reading from the N-terminus, the 41-residue chain is Large ribosomal subunit protein bL36B (41 aa).

Belongs to the bacterial ribosomal protein bL36 family.

This Neisseria meningitidis serogroup B (strain ATCC BAA-335 / MC58) protein is Large ribosomal subunit protein bL36B.